The sequence spans 619 residues: Long-chain fatty acid transport protein 6 (619 aa).

2 helical membrane passes run 22 to 42 and 119 to 139; these read LLFP…LIII and VHVW…NTNI. Residue 221–232 participates in AMP binding; that stretch reads YIFTSGTTGLPK.

The protein belongs to the ATP-dependent AMP-binding enzyme family. As to expression, strongly expressed in heart and localizes to cardiac myocytes. Expressed at moderate levels in placenta, testis, and adrenal glands. Expressed at very low levels in kidney, bladder and uterus.

Its subcellular location is the cell membrane. The protein localises to the sarcolemma. The catalysed reaction is a fatty acid(in) = a fatty acid(out). It carries out the reaction hexadecanoate(out) = hexadecanoate(in). It catalyses the reaction (9Z)-octadecenoate(out) = (9Z)-octadecenoate(in). The enzyme catalyses (9Z,12Z)-octadecadienoate(out) = (9Z,12Z)-octadecadienoate(in). The catalysed reaction is a very long-chain fatty acid + ATP + CoA = a very long-chain fatty acyl-CoA + AMP + diphosphate. It carries out the reaction tetracosanoate + ATP + CoA = tetracosanoyl-CoA + AMP + diphosphate. It catalyses the reaction a long-chain fatty acid + ATP + CoA = a long-chain fatty acyl-CoA + AMP + diphosphate. The enzyme catalyses (5Z,8Z,11Z,14Z)-eicosatetraenoate + ATP + CoA = (5Z,8Z,11Z,14Z)-eicosatetraenoyl-CoA + AMP + diphosphate. The catalysed reaction is (9Z)-octadecenoate + ATP + CoA = (9Z)-octadecenoyl-CoA + AMP + diphosphate. Mediates the import of long-chain fatty acids (LCFA) into the cell by facilitating their transport at the plasma membrane. Also functions as an acyl-CoA ligase catalyzing the ATP-dependent formation of fatty acyl-CoA using LCFA and very-long-chain fatty acids (VLCFA) as substrates. Plays a pivotal role in regulating available LCFA substrates from exogenous sources in tissues undergoing high levels of beta-oxidation such as the heart. In Homo sapiens (Human), this protein is Long-chain fatty acid transport protein 6 (SLC27A6).